Here is a 247-residue protein sequence, read N- to C-terminus: MNLLITNDDGISSAGIKALERVLGKSYNTYLIAPLKERSVTSMALTVFQGMRVERINDNHYIADGFPVDCVNIGLYAEIFPKIDFVISGINRGVNMGYDVHYSGTVGAAKHGALHGIPSLAVSSGRIDPEDGYEKEAELVLAFLEQYKSQIQSGEIWNLNFPPEVSGTGTISELVFTRLGRRRYSEKYEKKQIIEGVSEFQLNGSLLGHDEETGTDFEAYAQGKIPLTPIQLDLTEKNRLKELLTNR.

A divalent metal cation-binding residues include Asp-8, Asp-9, Ser-39, and Asn-91.

This sequence belongs to the SurE nucleotidase family. A divalent metal cation is required as a cofactor.

The protein localises to the cytoplasm. It catalyses the reaction a ribonucleoside 5'-phosphate + H2O = a ribonucleoside + phosphate. Its function is as follows. Nucleotidase that shows phosphatase activity on nucleoside 5'-monophosphates. The sequence is that of 5'-nucleotidase SurE from Leptospira biflexa serovar Patoc (strain Patoc 1 / Ames).